Consider the following 474-residue polypeptide: 3-isopropylmalate dehydratase large subunit (474 aa).

Residues Cys352, Cys413, and Cys416 each coordinate [4Fe-4S] cluster.

Belongs to the aconitase/IPM isomerase family. LeuC type 1 subfamily. In terms of assembly, heterodimer of LeuC and LeuD. It depends on [4Fe-4S] cluster as a cofactor.

It carries out the reaction (2R,3S)-3-isopropylmalate = (2S)-2-isopropylmalate. Its pathway is amino-acid biosynthesis; L-leucine biosynthesis; L-leucine from 3-methyl-2-oxobutanoate: step 2/4. Functionally, catalyzes the isomerization between 2-isopropylmalate and 3-isopropylmalate, via the formation of 2-isopropylmaleate. The chain is 3-isopropylmalate dehydratase large subunit from Pseudomonas syringae pv. syringae (strain B728a).